The sequence spans 322 residues: Basic 30 kDa endochitinase (322 aa).

An N-terminal signal peptide occupies residues 1 to 22; sequence MRLSEFTTLFLLFSVLLLSASA. The Chitin-binding type-1 domain occupies 23–64; it reads EQCGSQAGGALCASGLCCSKFGWCGNTNEYCGPGNCQSQCPG. 4 disulfides stabilise this stretch: cysteine 25–cysteine 40, cysteine 34–cysteine 46, cysteine 39–cysteine 53, and cysteine 58–cysteine 62. Residues proline 66 and proline 68 each carry the 4-hydroxyproline modification. 3 disulfides stabilise this stretch: cysteine 93–cysteine 156, cysteine 168–cysteine 176, and cysteine 275–cysteine 307. Glutamate 138 serves as the catalytic Proton donor. The propeptide at 316 to 322 is removed in mature form; it reads GLLVDIM.

This sequence belongs to the glycosyl hydrolase 19 family. Chitinase class I subfamily. In terms of processing, the 4-hydroxyproline residues are not glycosylated in this plant vacuolar protein.

Its subcellular location is the vacuole. It localises to the secreted. The protein resides in the cell wall. It catalyses the reaction Random endo-hydrolysis of N-acetyl-beta-D-glucosaminide (1-&gt;4)-beta-linkages in chitin and chitodextrins.. In terms of biological role, defense against chitin-containing fungal pathogens. The polypeptide is Basic 30 kDa endochitinase (CHI9) (Solanum lycopersicum (Tomato)).